A 186-amino-acid chain; its full sequence is Ribosome-recycling factor (186 aa).

The protein belongs to the RRF family.

The protein localises to the cytoplasm. Responsible for the release of ribosomes from messenger RNA at the termination of protein biosynthesis. May increase the efficiency of translation by recycling ribosomes from one round of translation to another. The sequence is that of Ribosome-recycling factor from Porphyromonas gingivalis (strain ATCC BAA-308 / W83).